An 806-amino-acid chain; its full sequence is MGKKRIVFFAYLPFFTIFMSFSFAGITKESPFSIGQTLSSSNGVYELGFFSLNNSQNQYLGIWFKSIIPQVVVWVANREKPVTDSAANLGISSNGSLLLSNGKHGVVWSTGDIFASNGSRAELTDHGNLVFIDKVSGRTLWQSFEHLGNTLLPTSIMMYNLVAGEKRGLTAWKSYTDPSPGEFVALITPQVPSQGIIMRGSTRYYRTGPWAKTRFTGSPQMDESYTSPFILTQDVNGSGYFSFVERGKPSRMILTSEGTMKVLVHNGMDWESTYEGPANSCDIYGVCGPFGLCVVSIPPKCKCFKGFVPKFAKEWKKGNWTSGCVRRTELHCQGNSSGKDANVFYTVPNIKPPDFYEYANSQNAEECHQNCLHNCSCLAFSYIPGIGCLMWSKDLMDTRQFSAAGELLSIRLARSELDVNKRKMTIVASTVSLTLFVIFGFAAFGFWRCRVEHNAHISNDAWRNFLQSQDVPGLEFFEMNAIQTATNNFSLSNKLGPGGFGSVYKARNGKLQDGREIAVKRLSSSSGQGKQEFMNEIVLISKLQHRNLVRVLGCCVEGTEKLLIYGFLKNKSLDTFVFDARKKLELDWPKRFEIIEGIARGLLYLHRDSRLRVIHRDLKVSNILLDEKMNPKISDFGLARMFQGTQYQEKTRRVVGTLGYMSPEYAWTGVFSEKSDIYSFGVLLLEIISGKKISSFSYGEEGKALLAYAWECWCETREVNFLDQALADSSHPSEVGRCVQIGLLCVQHEPADRPNTLELLSMLTTTSDLPLPKKPTFVVHTRKDESPSNDSMITVNEMTESVIQGR.

Positions 1–24 are cleaved as a signal peptide; it reads MGKKRIVFFAYLPFFTIFMSFSFA. Positions 25–144 constitute a Bulb-type lectin domain; it reads GITKESPFSI…VSGRTLWQSF (120 aa). Topologically, residues 25-425 are extracellular; that stretch reads GITKESPFSI…ELDVNKRKMT (401 aa). N-linked (GlcNAc...) asparagine glycosylation is found at Asn-53, Asn-94, Asn-117, and Asn-236. Residues 277–313 form the EGF-like domain; sequence PANSCDIYGVCGPFGLCVVSIPPKCKCFKGFVPKFAK. 2 disulfide bridges follow: Cys-281–Cys-293 and Cys-287–Cys-301. N-linked (GlcNAc...) asparagine glycosylation is found at Asn-319, Asn-335, and Asn-374. One can recognise a PAN domain in the interval 332–414; sequence CQGNSSGKDA…GELLSIRLAR (83 aa). Intrachain disulfides connect Cys-367/Cys-388 and Cys-371/Cys-377. A helical membrane pass occupies residues 426 to 446; that stretch reads IVASTVSLTLFVIFGFAAFGF. The Cytoplasmic portion of the chain corresponds to 447–806; that stretch reads WRCRVEHNAH…EMTESVIQGR (360 aa). The 289-residue stretch at 489 to 777 folds into the Protein kinase domain; sequence FSLSNKLGPG…DLPLPKKPTF (289 aa). ATP contacts are provided by residues 495–503 and Lys-520; that span reads LGPGGFGSV. 2 positions are modified to phosphoserine: Ser-526 and Ser-541. Residues 581 to 598 form a caM-binding region; sequence RKKLELDWPKRFEIIEGI. Residue Asp-617 is the Proton acceptor of the active site. Residues Ser-621 and Ser-634 each carry the phosphoserine modification. Position 651 is a phosphothreonine (Thr-651). Phosphoserine occurs at positions 694, 695, and 788.

This sequence belongs to the protein kinase superfamily. Ser/Thr protein kinase family.

It localises to the cell membrane. It carries out the reaction L-seryl-[protein] + ATP = O-phospho-L-seryl-[protein] + ADP + H(+). The enzyme catalyses L-threonyl-[protein] + ATP = O-phospho-L-threonyl-[protein] + ADP + H(+). This Arabidopsis thaliana (Mouse-ear cress) protein is G-type lectin S-receptor-like serine/threonine-protein kinase At1g61430.